Consider the following 309-residue polypeptide: Tagatose-6-phosphate kinase (309 aa).

It belongs to the carbohydrate kinase PfkB family. LacC subfamily.

The enzyme catalyses D-tagatofuranose 6-phosphate + ATP = D-tagatofuranose 1,6-bisphosphate + ADP + H(+). It participates in carbohydrate metabolism; D-tagatose 6-phosphate degradation; D-glyceraldehyde 3-phosphate and glycerone phosphate from D-tagatose 6-phosphate: step 1/2. The polypeptide is Tagatose-6-phosphate kinase (Streptococcus pneumoniae (strain Taiwan19F-14)).